We begin with the raw amino-acid sequence, 100 residues long: Urease subunit gamma (100 aa).

It belongs to the urease gamma subunit family. As to quaternary structure, heterotrimer of UreA (gamma), UreB (beta) and UreC (alpha) subunits. Three heterotrimers associate to form the active enzyme.

It is found in the cytoplasm. It catalyses the reaction urea + 2 H2O + H(+) = hydrogencarbonate + 2 NH4(+). The protein operates within nitrogen metabolism; urea degradation; CO(2) and NH(3) from urea (urease route): step 1/1. The polypeptide is Urease subunit gamma (Alkalilimnicola ehrlichii (strain ATCC BAA-1101 / DSM 17681 / MLHE-1)).